Consider the following 131-residue polypeptide: Small ribosomal subunit protein uS11 (131 aa).

Belongs to the universal ribosomal protein uS11 family. As to quaternary structure, part of the 30S ribosomal subunit. Interacts with proteins S7 and S18. Binds to IF-3.

In terms of biological role, located on the platform of the 30S subunit, it bridges several disparate RNA helices of the 16S rRNA. Forms part of the Shine-Dalgarno cleft in the 70S ribosome. The chain is Small ribosomal subunit protein uS11 from Paramagnetospirillum magneticum (strain ATCC 700264 / AMB-1) (Magnetospirillum magneticum).